The primary structure comprises 314 residues: Olfactory receptor 1E5 (314 aa).

At 1–25 (MMGQNQTSISDFLLLGLPIQPEQQN) the chain is on the extracellular side. The N-linked (GlcNAc...) asparagine glycan is linked to Asn-5. Residues 26–49 (LCYALFLAMYLTTLLGNLLIIVLI) form a helical membrane-spanning segment. Topologically, residues 50 to 57 (RLDSHLHT) are cytoplasmic. Residues 58-79 (PMYLFLSNLSFSDLCFSSVTIP) traverse the membrane as a helical segment. Residues 80–100 (KLLQNMQNQDPSIPYADCLTQ) are Extracellular-facing. The cysteines at positions 97 and 189 are disulfide-linked. Residues 101 to 120 (MYFFLLFGDLESFLLVAMAY) traverse the membrane as a helical segment. Residues 121 to 139 (DRYVAICFPLHYTAIMSPM) lie on the Cytoplasmic side of the membrane. The helical transmembrane segment at 140–158 (LCLSLVALSWVLTTFHAML) threads the bilayer. At 159–196 (HTLLMARLCFCADNVIPHFFCDMSALLKLACSDTRVNE) the chain is on the extracellular side. A helical transmembrane segment spans residues 197-219 (WVIFIMGGLIVVIPFLLILGSYA). Residues 220 to 236 (RIVSSILKVPSSKGICK) are Cytoplasmic-facing. A helical membrane pass occupies residues 237–260 (AFSTCGSHLSVVSLFYGTIIGLYL). Over 261 to 272 (CPSANSSTLKET) the chain is Extracellular. Asn-265 is a glycosylation site (N-linked (GlcNAc...) asparagine). The helical transmembrane segment at 273-292 (VMAMMYTVVTPMLNPFIYSL) threads the bilayer. Residues 293–314 (RNRDMKGALERVIXKRKNPFLL) are Cytoplasmic-facing.

Belongs to the G-protein coupled receptor 1 family.

It localises to the cell membrane. Odorant receptor. This Pan troglodytes (Chimpanzee) protein is Olfactory receptor 1E5 (OR1E5).